The chain runs to 400 residues: Enoyl-[acyl-carrier-protein] reductase [NADH] (400 aa).

NAD(+) contacts are provided by residues 48-53 (GSSSGY), 74-75 (FE), 111-112 (DA), and 139-140 (LA). Tyr225 contributes to the substrate binding site. Tyr235 (proton donor) is an active-site residue. NAD(+) is bound by residues Lys244 and 273–275 (VVT).

Belongs to the TER reductase family. Monomer.

It catalyses the reaction a 2,3-saturated acyl-[ACP] + NAD(+) = a (2E)-enoyl-[ACP] + NADH + H(+). It functions in the pathway lipid metabolism; fatty acid biosynthesis. Functionally, involved in the final reduction of the elongation cycle of fatty acid synthesis (FAS II). Catalyzes the reduction of a carbon-carbon double bond in an enoyl moiety that is covalently linked to an acyl carrier protein (ACP). The protein is Enoyl-[acyl-carrier-protein] reductase [NADH] of Shewanella piezotolerans (strain WP3 / JCM 13877).